The chain runs to 225 residues: Holliday junction branch migration complex subunit RuvA (225 aa).

Positions 1 to 68 are domain I; sequence MIGWLQGQKV…DDGSSLFGFP (68 aa). The domain II stretch occupies residues 69-147; that stretch reads ERRERDMFRT…EFSCRDPGMS (79 aa). The segment at 148–158 is flexible linker; sequence LVDNGVIDSHQ. Residues 159-225 are domain III; sequence LKDSSLHELQ…SLRWLSQEAA (67 aa).

This sequence belongs to the RuvA family. Homotetramer. Forms an RuvA(8)-RuvB(12)-Holliday junction (HJ) complex. HJ DNA is sandwiched between 2 RuvA tetramers; dsDNA enters through RuvA and exits via RuvB. An RuvB hexamer assembles on each DNA strand where it exits the tetramer. Each RuvB hexamer is contacted by two RuvA subunits (via domain III) on 2 adjacent RuvB subunits; this complex drives branch migration. In the full resolvosome a probable DNA-RuvA(4)-RuvB(12)-RuvC(2) complex forms which resolves the HJ.

It localises to the cytoplasm. In terms of biological role, the RuvA-RuvB-RuvC complex processes Holliday junction (HJ) DNA during genetic recombination and DNA repair, while the RuvA-RuvB complex plays an important role in the rescue of blocked DNA replication forks via replication fork reversal (RFR). RuvA specifically binds to HJ cruciform DNA, conferring on it an open structure. The RuvB hexamer acts as an ATP-dependent pump, pulling dsDNA into and through the RuvAB complex. HJ branch migration allows RuvC to scan DNA until it finds its consensus sequence, where it cleaves and resolves the cruciform DNA. The polypeptide is Holliday junction branch migration complex subunit RuvA (Prochlorococcus marinus (strain MIT 9313)).